Here is a 322-residue protein sequence, read N- to C-terminus: N-acetyl-gamma-glutamyl-phosphate reductase (322 aa).

Cys-132 is a catalytic residue.

This sequence belongs to the NAGSA dehydrogenase family. Type 1 subfamily.

Its subcellular location is the cytoplasm. It carries out the reaction N-acetyl-L-glutamate 5-semialdehyde + phosphate + NADP(+) = N-acetyl-L-glutamyl 5-phosphate + NADPH + H(+). Its pathway is amino-acid biosynthesis; L-arginine biosynthesis; N(2)-acetyl-L-ornithine from L-glutamate: step 3/4. Its function is as follows. Catalyzes the NADPH-dependent reduction of N-acetyl-5-glutamyl phosphate to yield N-acetyl-L-glutamate 5-semialdehyde. The chain is N-acetyl-gamma-glutamyl-phosphate reductase from Bacteroides fragilis (strain YCH46).